The sequence spans 331 residues: Beta-ketoacyl-[acyl-carrier-protein] synthase III (331 aa).

Residues C113 and H253 contribute to the active site. Positions 254–258 (QANTR) are ACP-binding. N283 is a catalytic residue.

This sequence belongs to the thiolase-like superfamily. FabH family. In terms of assembly, homodimer.

It is found in the cytoplasm. It catalyses the reaction malonyl-[ACP] + acetyl-CoA + H(+) = 3-oxobutanoyl-[ACP] + CO2 + CoA. It participates in lipid metabolism; fatty acid biosynthesis. Catalyzes the condensation reaction of fatty acid synthesis by the addition to an acyl acceptor of two carbons from malonyl-ACP. Catalyzes the first condensation reaction which initiates fatty acid synthesis and may therefore play a role in governing the total rate of fatty acid production. Possesses both acetoacetyl-ACP synthase and acetyl transacylase activities. Its substrate specificity determines the biosynthesis of branched-chain and/or straight-chain of fatty acids. This chain is Beta-ketoacyl-[acyl-carrier-protein] synthase III, found in Desulfitobacterium hafniense (strain DSM 10664 / DCB-2).